A 785-amino-acid chain; its full sequence is Conidiophore development regulator abaA (785 aa).

The interval Met-1–Pro-22 is disordered. A DNA-binding region (TEA) is located at residues Gly-130 to Asp-204. A disordered region spans residues Glu-213–Asn-232.

Belongs to the TEC1 family.

The protein resides in the nucleus. BrlA, abaA and wetA are pivotal regulators of conidiophore development and conidium maturation. They act individually and together to regulate their own expression and that of numerous other sporulation-specific genes. Binds to the sequence 5'-CATTCY-3', where Y is a pyrimidine, making both major- and minor-groove contacts. Controls expression of wetA. The polypeptide is Conidiophore development regulator abaA (Aspergillus oryzae (strain ATCC 42149 / RIB 40) (Yellow koji mold)).